The chain runs to 76 residues: MHRWISQNNIRLPCGAFFISVLFFFNAVCIVSDNLLIIESFGEMAYNISYLTRVPGTNTLLACCCLLRPEEVNSEY.

A helical transmembrane segment spans residues 12 to 32 (LPCGAFFISVLFFFNAVCIVS).

Its subcellular location is the cell membrane. This is an uncharacterized protein from Escherichia coli O157:H7.